The sequence spans 1183 residues: Chromosome partition protein Smc (1183 aa).

32–39 (PNGSGKSN) is a binding site for ATP. Positions 162–483 (EEAAGIKKLQ…KLSQDIREFE (322 aa)) form a coiled coil. Residues 519 to 632 (SGIDGVLISL…VENIDIATDI (114 aa)) enclose the SMC hinge domain. Positions 666-1019 (INQIFERKKE…VMDLIQEIDE (354 aa)) form a coiled coil.

Belongs to the SMC family. Homodimer.

It localises to the cytoplasm. Its function is as follows. Required for chromosome condensation and partitioning. This Fusobacterium nucleatum subsp. nucleatum (strain ATCC 25586 / DSM 15643 / BCRC 10681 / CIP 101130 / JCM 8532 / KCTC 2640 / LMG 13131 / VPI 4355) protein is Chromosome partition protein Smc.